The primary structure comprises 340 residues: L-lysine 2,3-aminomutase (340 aa).

Positions 106 to 321 (RKYNNRILLL…SMISGFLVPK (216 aa)) constitute a Radical SAM core domain. [4Fe-4S] cluster-binding residues include cysteine 120, cysteine 124, and cysteine 127. An N6-(pyridoxal phosphate)lysine modification is found at lysine 332.

The protein belongs to the radical SAM superfamily. KamA family. [4Fe-4S] cluster serves as cofactor. Requires pyridoxal 5'-phosphate as cofactor.

The catalysed reaction is L-lysine = D-beta-lysine. Its function is as follows. With EpmA is involved in the beta-lysylation step of the post-translational modification of translation elongation factor P (EF-P) on 'Lys-34'. EpmB appears to act before EpmA. Displays lysine 2,3-aminomutase activity, producing (R)-beta-lysine from (S)-alpha-lysine (L-lysine). This is L-lysine 2,3-aminomutase (epmB) from Buchnera aphidicola subsp. Baizongia pistaciae (strain Bp).